A 160-amino-acid chain; its full sequence is Transcription elongation factor GreA (160 aa).

The stretch at M1–R72 forms a coiled coil.

This sequence belongs to the GreA/GreB family.

Functionally, necessary for efficient RNA polymerase transcription elongation past template-encoded arresting sites. The arresting sites in DNA have the property of trapping a certain fraction of elongating RNA polymerases that pass through, resulting in locked ternary complexes. Cleavage of the nascent transcript by cleavage factors such as GreA or GreB allows the resumption of elongation from the new 3'terminus. GreA releases sequences of 2 to 3 nucleotides. The polypeptide is Transcription elongation factor GreA (Streptococcus pneumoniae (strain Hungary19A-6)).